A 691-amino-acid chain; its full sequence is Two-component response regulator ORR21 (691 aa).

A Response regulatory domain is found at 17–132 (KVLVVDDDPT…ELKNIWQHVI (116 aa)). At Asp68 the chain carries 4-aspartylphosphate. Residues 139–155 (NKEHEHSGSLDDTDRTR) are compositionally biased toward basic and acidic residues. The tract at residues 139–204 (NKEHEHSGSL…DPSSTSKKPR (66 aa)) is disordered. The segment at residues 199-258 (TSKKPRVVWSVELHQQFVNAVNHLGIDKAVPKKILELMNVPGLTRENVASHLQKFRLYLK) is a DNA-binding region (myb-like GARP).

This sequence belongs to the ARR family. Type-B subfamily. In terms of processing, two-component system major event consists of a His-to-Asp phosphorelay between a sensor histidine kinase (HK) and a response regulator (RR). In plants, the His-to-Asp phosphorelay involves an additional intermediate named Histidine-containing phosphotransfer protein (HPt). This multistep phosphorelay consists of a His-Asp-His-Asp sequential transfer of a phosphate group between first a His and an Asp of the HK protein, followed by the transfer to a conserved His of the HPt protein and finally the transfer to an Asp in the receiver domain of the RR protein.

It is found in the nucleus. In terms of biological role, transcriptional activator that binds specific DNA sequence. Functions as a response regulator involved in His-to-Asp phosphorelay signal transduction system. Phosphorylation of the Asp residue in the receiver domain activates the ability of the protein to promote the transcription of target genes. May directly activate some type-A response regulators in response to cytokinins. This Oryza sativa subsp. japonica (Rice) protein is Two-component response regulator ORR21.